The primary structure comprises 77 residues: Small ribosomal subunit protein bS18 (77 aa).

The protein belongs to the bacterial ribosomal protein bS18 family. Part of the 30S ribosomal subunit. Forms a tight heterodimer with protein bS6.

Binds as a heterodimer with protein bS6 to the central domain of the 16S rRNA, where it helps stabilize the platform of the 30S subunit. The chain is Small ribosomal subunit protein bS18 from Lactobacillus gasseri (strain ATCC 33323 / DSM 20243 / BCRC 14619 / CIP 102991 / JCM 1131 / KCTC 3163 / NCIMB 11718 / NCTC 13722 / AM63).